Reading from the N-terminus, the 182-residue chain is Prorelaxin (182 aa).

The signal sequence occupies residues 1–25 (MRRLFLSHVLGAWLLLSQLPRELSG). At Q26 the chain carries Pyrrolidone carboxylic acid. Disulfide bonds link C35–C169, C47–C182, and C168–C173. Positions 54–156 (KTVLRLEEPG…LKNLGLDKHS (103 aa)) are cleaved as a propeptide — connecting peptide. Residues 161–162 (MI) constitute a propeptide that is removed on maturation. Q163 is modified (pyrrolidone carboxylic acid).

It belongs to the insulin family. As to quaternary structure, heterodimer of a B chain and an A chain linked by two disulfide bonds.

The protein resides in the secreted. Functionally, relaxin is an ovarian hormone that acts with estrogen to produce dilatation of the birth canal in many mammals. The chain is Prorelaxin (RLN) from Equus caballus (Horse).